Reading from the N-terminus, the 306-residue chain is Manganese-binding lipoprotein MntA (306 aa).

The signal sequence occupies residues 1–18 (MRQGLMAAVLFATFALTG). A lipid anchor (N-palmitoyl cysteine) is attached at cysteine 19. Cysteine 19 carries S-diacylglycerol cysteine lipidation. Mn(2+) is bound by residues histidine 66, histidine 132, histidine 198, and aspartate 278.

The protein belongs to the bacterial solute-binding protein 9 family. As to quaternary structure, the complex is probably composed of two ATP-binding proteins (MntB), two transmembrane proteins (MntC and MntD) and a solute-binding protein (MntA). Interacts with FloT.

The protein localises to the cell membrane. It is found in the membrane raft. In terms of biological role, probably part of ATP-binding cassette (ABC) transport system MntABCD involved in manganese import. Binds manganese and delivers it to the membrane permease for translocation into the cytoplasm. The sequence is that of Manganese-binding lipoprotein MntA from Bacillus subtilis (strain 168).